The primary structure comprises 354 residues: Carbamoyl phosphate synthase small chain (354 aa).

The CPSase stretch occupies residues 1–167 (MEAVLILEDG…KEPKIHKTAN (167 aa)). 3 residues coordinate L-glutamine: Ser45, Gly219, and Gly221. The 184-residue stretch at 171–354 (RCVLIDCGVK…DEMIKLKDRK (184 aa)) folds into the Glutamine amidotransferase type-1 domain. Cys246 (nucleophile) is an active-site residue. 5 residues coordinate L-glutamine: Leu247, Gln250, Asn288, Gly290, and Phe291. Active-site residues include His330 and Glu332.

This sequence belongs to the CarA family. As to quaternary structure, composed of two chains; the small (or glutamine) chain promotes the hydrolysis of glutamine to ammonia, which is used by the large (or ammonia) chain to synthesize carbamoyl phosphate. Tetramer of heterodimers (alpha,beta)4.

It carries out the reaction hydrogencarbonate + L-glutamine + 2 ATP + H2O = carbamoyl phosphate + L-glutamate + 2 ADP + phosphate + 2 H(+). The catalysed reaction is L-glutamine + H2O = L-glutamate + NH4(+). Its pathway is amino-acid biosynthesis; L-arginine biosynthesis; carbamoyl phosphate from bicarbonate: step 1/1. It participates in pyrimidine metabolism; UMP biosynthesis via de novo pathway; (S)-dihydroorotate from bicarbonate: step 1/3. In terms of biological role, small subunit of the glutamine-dependent carbamoyl phosphate synthetase (CPSase). CPSase catalyzes the formation of carbamoyl phosphate from the ammonia moiety of glutamine, carbonate, and phosphate donated by ATP, constituting the first step of 2 biosynthetic pathways, one leading to arginine and/or urea and the other to pyrimidine nucleotides. The small subunit (glutamine amidotransferase) binds and cleaves glutamine to supply the large subunit with the substrate ammonia. The chain is Carbamoyl phosphate synthase small chain from Methanocaldococcus jannaschii (strain ATCC 43067 / DSM 2661 / JAL-1 / JCM 10045 / NBRC 100440) (Methanococcus jannaschii).